Here is a 1059-residue protein sequence, read N- to C-terminus: Probable sucrose-phosphate synthase (1059 aa).

4 disordered regions span residues 95–145 (AVQR…VKSR), 671–695 (RHPQWQRSEDGGESSESEESPGDSL), 710–731 (DGERSGDSGNDNSLDPDGNATD), and 748–769 (SKDTRRGGATEKSGQNSNASKF). Residues 102–114 (RRLERERGRREAT) are compositionally biased toward basic and acidic residues. Positions 681 to 691 (GGESSESEESP) are enriched in acidic residues.

It belongs to the glycosyltransferase 1 family. In terms of assembly, homodimer or homotetramer.

It carries out the reaction beta-D-fructose 6-phosphate + UDP-alpha-D-glucose = sucrose 6(F)-phosphate + UDP + H(+). Its pathway is glycan biosynthesis; sucrose biosynthesis; sucrose from D-fructose 6-phosphate and UDP-alpha-D-glucose: step 1/2. With respect to regulation, activity is regulated by phosphorylation and moderated by concentration of metabolites and light. Its function is as follows. Plays a role in photosynthetic sucrose synthesis by catalyzing the rate-limiting step of sucrose biosynthesis from UDP-glucose and fructose- 6-phosphate. Involved in the regulation of carbon partitioning in the leaves of plants. May regulate the synthesis of sucrose and therefore play a major role as a limiting factor in the export of photoassimilates out of the leaf. Plays a role for sucrose availability that is essential for plant growth and fiber elongation. This Vicia faba (Broad bean) protein is Probable sucrose-phosphate synthase (SPS).